Consider the following 430-residue polypeptide: Toxin coregulated pilus biosynthesis protein B (430 aa).

Positions 351–366 are enriched in polar residues; that stretch reads NFSSESAKDSQGTTQK. The interval 351–371 is disordered; that stretch reads NFSSESAKDSQGTTQKDGSKG.

Involved in TCP pilus biogenesis. The chain is Toxin coregulated pilus biosynthesis protein B (tcpB) from Vibrio cholerae serotype O1 (strain ATCC 39315 / El Tor Inaba N16961).